Consider the following 404-residue polypeptide: MFRLSHYLDQLYHPTPPRIARGTPKPVVIWNLTRRCNLKCKHCYTVSADVDFPGELTAAQARETLEDIGRFKVPALILSGGEPLLRDDLFALAKRARALTRVLALSTNGTGVIGSKADRVAEIGFDYVGISIDGIGATNDAFRGVIGAYEQALAGVRSCKRRGIKVGLRFTITEQNESQLPELLKLCDDEGVDKFYLSHLVYAGRGNKNRGEDADHARTRRAMDLLIARALESAEGRGHPLEIVTGNNDADAVYFLNWAKANFPAAQVAHLRKHLEAWGGNASGVGVANIDTQGDVHPDTYWSEYTVGSVKQTPFSELWTGPDPMLAELRRRPRPLKGRCGACAHQAVCGGNTRIRALQLTGDPWAEDPACYLTAAETGTATDIDRLTVRPFIGDRHDPKPAFV.

The Radical SAM core domain occupies 22 to 235 (GTPKPVVIWN…LIARALESAE (214 aa)). Cysteine 36, cysteine 40, cysteine 43, cysteine 340, cysteine 343, cysteine 349, and cysteine 371 together coordinate [4Fe-4S] cluster.

This sequence belongs to the radical SAM superfamily. The cofactor is [4Fe-4S] cluster.

The protein operates within porphyrin-containing compound metabolism. Its function is as follows. Involved in heme d1 biosynthesis. Radical SAM enzyme that catalyzes the removal of two propionate side chains from the intermediate 12,18-didecarboxysiroheme (DDSH) and may introduce the keto functions on rings A and B, yielding the heme d1 precursor dihydro-heme d1. The chain is Pre-heme d1 synthase from Dinoroseobacter shibae (strain DSM 16493 / NCIMB 14021 / DFL 12).